A 92-amino-acid chain; its full sequence is RNA-binding protein Hfq (92 aa).

Positions 9–68 (DPFLNALRRERVPVSIYLVNGIKLQGQVESFDQFVILLKNTVSQMVYKHAISTVVPSRPF) constitute a Sm domain.

The protein belongs to the Hfq family. Homohexamer.

RNA chaperone that binds small regulatory RNA (sRNAs) and mRNAs to facilitate mRNA translational regulation in response to envelope stress, environmental stress and changes in metabolite concentrations. Also binds with high specificity to tRNAs. The sequence is that of RNA-binding protein Hfq from Shewanella piezotolerans (strain WP3 / JCM 13877).